The chain runs to 213 residues: Phosphoribosyl-dephospho-CoA transferase (213 aa).

Residues aspartate 135 and aspartate 137 contribute to the active site.

It belongs to the MdcG family.

The enzyme catalyses apo-[malonate decarboxylase ACP] + 2'-(5''-triphospho-alpha-D-ribosyl)-3'-dephospho-CoA = holo-[malonate decarboxylase ACP] + diphosphate. Its function is as follows. Transfers 2'-(5-triphosphoribosyl)-3'-dephosphocoenzyme-A to the apo-[acyl-carrier-protein] of the malonate decarboxylase to yield holo-[acyl-carrier-protein]. The polypeptide is Phosphoribosyl-dephospho-CoA transferase (Xanthomonas axonopodis pv. citri (strain 306)).